The chain runs to 62 residues: uncharacterized protein (62 aa).

This is an uncharacterized protein from Escherichia coli.